Here is a 546-residue protein sequence, read N- to C-terminus: Choline/ethanolamine transporter FLVCR2 (546 aa).

A disordered region spans residues 1-84; that stretch reads MVNESLNQEE…TLAQPSGLTH (84 aa). The Cytoplasmic portion of the chain corresponds to 1-93; sequence MVNESLNQEE…HPNELVKEDS (93 aa). Residues 22–49 show a composition bias toward polar residues; the sequence is QADTSYSTQPSVSIHPSVSGHPSVSIHP. Tandem repeats lie at residues 31–36, 37–42, 43–48, 49–54, 55–60, 61–66, and 67–72. Positions 31–84 are 9 X 6 AA tandem repeats of P-S-[VS]-S-[VIAG]-[HD]; the sequence is PSVSIHPSVSGHPSVSIHPSVSGHPSVSIDPSVSVHPSSSAHPSTLAQPSGLTH. Low complexity predominate over residues 54–74; it reads HPSVSIDPSVSVHPSSSAHPS. The stretch at 73 to 78 is one 8; approximate repeat; that stretch reads PSTLAQ. Residues 79 to 84 form a 9; approximate repeat; it reads PSGLTH. The helical transmembrane segment at 94 to 118 threads the bilayer; it reads VIKVSKRRWAVVLVFSCYSLCNAFQ. Choline contacts are provided by N115, A116, and W119. Residues 119-136 lie on the Extracellular side of the membrane; it reads WIQYGSINNIFMNFYGVS. The chain crosses the membrane as a helical span at residues 137-164; the sequence is AFAIDWLSMCYMLTYIPLLLPVAWMLEK. At 165 to 166 the chain is on the cytoplasmic side; it reads FG. A helical transmembrane segment spans residues 167 to 186; sequence LRTIAITGSALNCLGAWVKL. Residues 187-193 are Extracellular-facing; sequence GSLEPHL. A helical membrane pass occupies residues 194–222; that stretch reads FPVTMVGQVICSVAQVFILGMPSRIASVW. L212 contributes to the choline binding site. At 223–227 the chain is on the cytoplasmic side; it reads FGANE. Residues 228–253 traverse the membrane as a helical segment; it reads VSTACSMAVFGNQLGIAIGFLVPPVL. The Extracellular segment spans residues 254–258; sequence VPNIK. A helical transmembrane segment spans residues 259–288; the sequence is DQEKLAYHISIMFYIIGGVATLLFILVIIV. The Cytoplasmic portion of the chain corresponds to 289-324; sequence FKEKPKYPPSRAQSLSYALATTDASYLSSIVRLFKN. A helical membrane pass occupies residues 325–355; it reads LNFVLLVITYGLNAGAFYALSTLLNRMVIMH. Y342 serves as a coordination point for choline. The Extracellular portion of the chain corresponds to 356 to 359; that stretch reads FPGQ. Residues 360–388 form a helical membrane-spanning segment; that stretch reads EVNAGRIGLTIVIAGMFGAMISGIWLDKS. Topologically, residues 389 to 390 are cytoplasmic; sequence KT. The chain crosses the membrane as a helical span at residues 391–413; it reads YKETTLVVYIMTLVGMVVYTFTL. The Extracellular segment spans residues 414-416; the sequence is NLN. The helical transmembrane segment at 417-446 threads the bilayer; it reads HLWIVFITADSLGFFMTGYLPLGFEFAVEL. Residues 447 to 454 are Cytoplasmic-facing; the sequence is TYPESEGV. A helical transmembrane segment spans residues 455-480; it reads SSGLLNVSAQVFGIIFTISQGQIIDN. Q464 is a binding site for choline. Residues 481–482 lie on the Extracellular side of the membrane; that stretch reads YG. The chain crosses the membrane as a helical span at residues 483–505; the sequence is SVPGNIFLCVFLALGSALTAFIK. Residues 506–546 are Cytoplasmic-facing; sequence SDLRRQRANKDAPETKVQEEEEEEEESNTSKVPTVLSEAHL. Over residues 511–523 the composition is skewed to basic and acidic residues; it reads QRANKDAPETKVQ. The tract at residues 511–546 is disordered; sequence QRANKDAPETKVQEEEEEEEESNTSKVPTVLSEAHL. S535 bears the Phosphoserine mark.

The protein belongs to the major facilitator superfamily. Feline leukemia virus subgroup C receptor (TC 2.A.1.28.1) family. As to quaternary structure, interacts with components of electron transfer chain complexes III, IV and V including CYC1, NDUFA4, COX4I1, ATP5PD and ATP5F1C; these interactions occur in the absence of heme and are disrupted upon heme binding. Interacts with ATP2A2; this interaction occurs in the absence of heme and promotes ATP2A2 proteasomal degradation; the complex is dissociated upon heme binding. Interacts with HMOX1; this interaction is potentiated in the presence of heme.

It localises to the cell membrane. Its subcellular location is the mitochondrion membrane. The protein localises to the endoplasmic reticulum membrane. The catalysed reaction is choline(out) = choline(in). It catalyses the reaction ethanolamine(in) = ethanolamine(out). It carries out the reaction heme b(in) = heme b(out). Choline uniporter that specifically mediates choline uptake at the blood-brain-barrier. Responsible for the majority of choline uptake across the blood-brain-barrier from the circulation into the brain. Choline, a nutrient critical for brain development, is a precursor of phosphatidylcholine, as well as betaine. Also mediates transport of ethanolamine. Choline and ethanolamine transport is not coupled with proton transport and is exclusively driven by the choline gradient across the plasma membrane. However, the presence of an inwardly directed proton gradient enhances choline uptake. Also acts as a heme b transporter. Required to regulate mitochondrial respiration processes, ATP synthesis and thermogenesis. At low heme levels, interacts with components of electron transfer chain (ETC) complexes and ATP2A2, leading to ubiquitin-mediated degradation of ATP2A2 and inhibition of thermogenesis. Upon heme binding, dissociates from ETC complexes to allow switching from mitochondrial ATP synthesis to thermogenesis. The sequence is that of Choline/ethanolamine transporter FLVCR2 (Flvcr2) from Rattus norvegicus (Rat).